Reading from the N-terminus, the 116-residue chain is Vesicle-associated membrane protein 5 (116 aa).

Topologically, residues 1 to 72 are cytoplasmic; sequence MAGKELERCQ…RWENARCRIY (72 aa). The 61-residue stretch at 5–65 folds into the v-SNARE coiled-coil homology domain; it reads ELERCQRQAD…KTLAQKKRWE (61 aa). Residues Ser41, Ser48, and Ser49 each carry the phosphoserine modification. A helical; Anchor for type IV membrane protein membrane pass occupies residues 73–93; it reads MGLAVGIALLILLIVLLVIFL. The Vesicular portion of the chain corresponds to 94-116; the sequence is PQSSKGSSAPQVQDAGPASGPGE. The segment at 97–116 is disordered; that stretch reads SKGSSAPQVQDAGPASGPGE.

This sequence belongs to the synaptobrevin family.

The protein localises to the cell membrane. It localises to the endomembrane system. The protein resides in the golgi apparatus. Its subcellular location is the trans-Golgi network membrane. In terms of biological role, may participate in trafficking events that are associated with myogenesis, such as myoblast fusion and/or GLUT4 trafficking. In Bos taurus (Bovine), this protein is Vesicle-associated membrane protein 5 (VAMP5).